A 93-amino-acid polypeptide reads, in one-letter code: ATP synthase subunit c (93 aa).

Transmembrane regions (helical) follow at residues 13–33 (AIGV…GMGI) and 58–78 (ISLA…FILL).

It belongs to the ATPase C chain family. As to quaternary structure, F-type ATPases have 2 components, F(1) - the catalytic core - and F(0) - the membrane proton channel. F(1) has five subunits: alpha(3), beta(3), gamma(1), delta(1), epsilon(1). F(0) has three main subunits: a(1), b(2) and c(10-14). The alpha and beta chains form an alternating ring which encloses part of the gamma chain. F(1) is attached to F(0) by a central stalk formed by the gamma and epsilon chains, while a peripheral stalk is formed by the delta and b chains.

The protein localises to the cell inner membrane. In terms of biological role, f(1)F(0) ATP synthase produces ATP from ADP in the presence of a proton or sodium gradient. F-type ATPases consist of two structural domains, F(1) containing the extramembraneous catalytic core and F(0) containing the membrane proton channel, linked together by a central stalk and a peripheral stalk. During catalysis, ATP synthesis in the catalytic domain of F(1) is coupled via a rotary mechanism of the central stalk subunits to proton translocation. Its function is as follows. Key component of the F(0) channel; it plays a direct role in translocation across the membrane. A homomeric c-ring of between 10-14 subunits forms the central stalk rotor element with the F(1) delta and epsilon subunits. The chain is ATP synthase subunit c from Campylobacter hominis (strain ATCC BAA-381 / DSM 21671 / CCUG 45161 / LMG 19568 / NCTC 13146 / CH001A).